We begin with the raw amino-acid sequence, 155 residues long: Transcriptional repressor NrdR (155 aa).

Residues 3–34 (CPYCGHLEDRVVDSRETQDGQATRRRRACLSC) fold into a zinc finger. In terms of domain architecture, ATP-cone spans 49 to 139 (PQVVKKDGRR…VYRAFRDVGE (91 aa)).

It belongs to the NrdR family. Requires Zn(2+) as cofactor.

In terms of biological role, negatively regulates transcription of bacterial ribonucleotide reductase nrd genes and operons by binding to NrdR-boxes. This is Transcriptional repressor NrdR from Anaeromyxobacter dehalogenans (strain 2CP-1 / ATCC BAA-258).